Here is a 227-residue protein sequence, read N- to C-terminus: MTNNLSGYRNKFVRVKTSKKRTVSSGNWLRRQLNDPYVAKARIEGFRSRAAYKLLEIHEKFKLFTPNMKIVDLGAAPGGWSQVASKLIKASDNSLNNKIISIDLLEIEPIIGVEFLQKDFFEENTEELIIQVLDGKADIVMSDMASNTTGHKATDHIRTLLLCEQAFEFALKVLKPSGHFIAKIFRGGAENELLNKVKCEFKTVKHFKPSSSRSESTEIYLVAINKK.

S-adenosyl-L-methionine-binding residues include Gly-78, Trp-80, Asp-103, Asp-119, and Asp-143. Lys-183 functions as the Proton acceptor in the catalytic mechanism.

It belongs to the class I-like SAM-binding methyltransferase superfamily. RNA methyltransferase RlmE family.

The protein resides in the cytoplasm. It carries out the reaction uridine(2552) in 23S rRNA + S-adenosyl-L-methionine = 2'-O-methyluridine(2552) in 23S rRNA + S-adenosyl-L-homocysteine + H(+). In terms of biological role, specifically methylates the uridine in position 2552 of 23S rRNA at the 2'-O position of the ribose in the fully assembled 50S ribosomal subunit. This is Ribosomal RNA large subunit methyltransferase E from Rickettsia akari (strain Hartford).